A 173-amino-acid polypeptide reads, in one-letter code: C-phycocyanin-2 beta subunit (173 aa).

Residue Asn73 is modified to N4-methylasparagine. Positions 83 and 154 each coordinate (2R,3E)-phycocyanobilin.

This sequence belongs to the phycobiliprotein family. Heterodimer of an alpha and a beta subunit, which further assembles into trimers and the trimers into hexamers. Post-translationally, contains two covalently linked bilin chromophores.

The protein resides in the cellular thylakoid membrane. Light-harvesting photosynthetic bile pigment-protein from the phycobiliprotein complex (phycobilisome, PBS). Phycocyanin is the major phycobiliprotein in the PBS rod. This chain is C-phycocyanin-2 beta subunit (cpcB2), found in Synechococcus sp. (strain ATCC 27144 / PCC 6301 / SAUG 1402/1) (Anacystis nidulans).